The chain runs to 206 residues: Large ribosomal subunit protein uL4 (206 aa).

Residues 45 to 78 form a disordered region; sequence QGNRAQKDREQVKHTTKKPWRQKGTGRARAGMSS. Over residues 58–70 the composition is skewed to basic residues; it reads HTTKKPWRQKGTG.

The protein belongs to the universal ribosomal protein uL4 family. Part of the 50S ribosomal subunit.

Functionally, one of the primary rRNA binding proteins, this protein initially binds near the 5'-end of the 23S rRNA. It is important during the early stages of 50S assembly. It makes multiple contacts with different domains of the 23S rRNA in the assembled 50S subunit and ribosome. Forms part of the polypeptide exit tunnel. The protein is Large ribosomal subunit protein uL4 of Burkholderia ambifaria (strain MC40-6).